We begin with the raw amino-acid sequence, 351 residues long: Biotin synthase (351 aa).

Positions 73-298 (PEVEVEGIIS…RTILRYSGGR (226 aa)) constitute a Radical SAM core domain. [4Fe-4S] cluster-binding residues include cysteine 88, cysteine 92, and cysteine 95. Positions 131, 164, 223, and 293 each coordinate [2Fe-2S] cluster.

Belongs to the radical SAM superfamily. Biotin synthase family. In terms of assembly, homodimer. The cofactor is [4Fe-4S] cluster. It depends on [2Fe-2S] cluster as a cofactor.

The enzyme catalyses (4R,5S)-dethiobiotin + (sulfur carrier)-SH + 2 reduced [2Fe-2S]-[ferredoxin] + 2 S-adenosyl-L-methionine = (sulfur carrier)-H + biotin + 2 5'-deoxyadenosine + 2 L-methionine + 2 oxidized [2Fe-2S]-[ferredoxin]. The protein operates within cofactor biosynthesis; biotin biosynthesis; biotin from 7,8-diaminononanoate: step 2/2. In terms of biological role, catalyzes the conversion of dethiobiotin (DTB) to biotin by the insertion of a sulfur atom into dethiobiotin via a radical-based mechanism. This is Biotin synthase from Frankia alni (strain DSM 45986 / CECT 9034 / ACN14a).